Here is a 318-residue protein sequence, read N- to C-terminus: Leucine-rich repeat domain-containing protein YddK (318 aa).

LRR repeat units lie at residues 109-129, 130-151, 153-173, 174-194, 195-216, 217-237, 238-258, 260-280, and 284-305; these read NFTS…TNYD, RLVK…QGRN, SITH…DRLS, SVTY…ESCE, WLQY…NKNE, LLLL…LFPN, LNTL…YSNF, NVQT…DFLT, and SIKS…NTSD.

This is Leucine-rich repeat domain-containing protein YddK (yddK) from Escherichia coli (strain K12).